We begin with the raw amino-acid sequence, 416 residues long: Glutamyl-tRNA reductase (416 aa).

Residues 49 to 52 (TCNR), Ser105, 110 to 112 (EPQ), and Gln116 each bind substrate. Cys50 (nucleophile) is an active-site residue. NADP(+) is bound at residue 185-190 (GAGEMI).

This sequence belongs to the glutamyl-tRNA reductase family. As to quaternary structure, homodimer.

The catalysed reaction is (S)-4-amino-5-oxopentanoate + tRNA(Glu) + NADP(+) = L-glutamyl-tRNA(Glu) + NADPH + H(+). The protein operates within porphyrin-containing compound metabolism; protoporphyrin-IX biosynthesis; 5-aminolevulinate from L-glutamyl-tRNA(Glu): step 1/2. Catalyzes the NADPH-dependent reduction of glutamyl-tRNA(Glu) to glutamate 1-semialdehyde (GSA). This Nitrosomonas europaea (strain ATCC 19718 / CIP 103999 / KCTC 2705 / NBRC 14298) protein is Glutamyl-tRNA reductase.